The primary structure comprises 540 residues: Putative cysteine ligase BshC (540 aa).

A coiled-coil region spans residues 455–491; sequence GKENLKRLIRVVNSFEEKVKQRHRKNNQVAIQQLQKI.

Belongs to the BshC family.

Involved in bacillithiol (BSH) biosynthesis. May catalyze the last step of the pathway, the addition of cysteine to glucosamine malate (GlcN-Mal) to generate BSH. The protein is Putative cysteine ligase BshC of Desulforamulus reducens (strain ATCC BAA-1160 / DSM 100696 / MI-1) (Desulfotomaculum reducens).